A 302-amino-acid polypeptide reads, in one-letter code: tRNA dimethylallyltransferase (302 aa).

9 to 16 lines the ATP pocket; it reads GPTGTGKS. Residue 11–16 coordinates substrate; the sequence is TGTGKS.

This sequence belongs to the IPP transferase family. Monomer. The cofactor is Mg(2+).

It catalyses the reaction adenosine(37) in tRNA + dimethylallyl diphosphate = N(6)-dimethylallyladenosine(37) in tRNA + diphosphate. Catalyzes the transfer of a dimethylallyl group onto the adenine at position 37 in tRNAs that read codons beginning with uridine, leading to the formation of N6-(dimethylallyl)adenosine (i(6)A). This Mycolicibacterium smegmatis (strain ATCC 700084 / mc(2)155) (Mycobacterium smegmatis) protein is tRNA dimethylallyltransferase.